The following is a 128-amino-acid chain: Glycine cleavage system H protein (128 aa).

The Lipoyl-binding domain maps to leucine 24–arginine 106. At lysine 65 the chain carries N6-lipoyllysine.

It belongs to the GcvH family. The glycine cleavage system is composed of four proteins: P, T, L and H. (R)-lipoate is required as a cofactor.

Its function is as follows. The glycine cleavage system catalyzes the degradation of glycine. The H protein shuttles the methylamine group of glycine from the P protein to the T protein. In Prochlorococcus marinus (strain NATL1A), this protein is Glycine cleavage system H protein.